A 270-amino-acid chain; its full sequence is Flagellar hook-basal body complex protein FlhO (270 aa).

This sequence belongs to the flagella basal body rod proteins family.

Not required for motility. The protein is Flagellar hook-basal body complex protein FlhO (flhO) of Bacillus subtilis (strain 168).